The sequence spans 66 residues: MSEEKLKAKVEQASGSLKEGAGKLTGDKELEAKGFVEKTIAKGKELADDAKEAVEGAVDAVKEKLK.

A compositionally biased stretch (basic and acidic residues) spans 1-10 (MSEEKLKAKV). The segment at 1–22 (MSEEKLKAKVEQASGSLKEGAG) is disordered.

The protein belongs to the UPF0337 (CsbD) family.

The protein is UPF0337 protein M6_Spy1542 of Streptococcus pyogenes serotype M6 (strain ATCC BAA-946 / MGAS10394).